The primary structure comprises 1192 residues: Protein FAM83H (1192 aa).

Disordered regions lie at residues E435–G542, D557–P661, S695–P720, L737–I1082, and I1094–N1145. Positions M437–R447 are enriched in basic and acidic residues. Polar residues-rich tracts occupy residues Q523–S538 and S629–T652. Basic and acidic residues-rich tracts occupy residues L737–S759 and D768–K789. Positions V790 to D810 are enriched in polar residues. Residues D820–L834 show a composition bias toward basic and acidic residues. The segment covering T861–D878 has biased composition (polar residues). 2 stretches are compositionally biased toward basic and acidic residues: residues V880–P892 and A914–K925. Residues S926–S946 show a composition bias toward low complexity. Basic and acidic residues predominate over residues E994–K1005. Positions K1068–I1082 are enriched in polar residues. Positions Q1107–V1122 are enriched in basic and acidic residues.

This sequence belongs to the FAM83 family.

The protein localises to the cytoplasm. It is found in the cytoskeleton. May play a role in keratin cytoskeleton disassembly. The chain is Protein FAM83H from Danio rerio (Zebrafish).